The sequence spans 445 residues: Proline--tRNA ligase (445 aa).

The protein belongs to the class-II aminoacyl-tRNA synthetase family. ProS type 2 subfamily. As to quaternary structure, homodimer.

It is found in the cytoplasm. The catalysed reaction is tRNA(Pro) + L-proline + ATP = L-prolyl-tRNA(Pro) + AMP + diphosphate. Functionally, catalyzes the attachment of proline to tRNA(Pro) in a two-step reaction: proline is first activated by ATP to form Pro-AMP and then transferred to the acceptor end of tRNA(Pro). This is Proline--tRNA ligase from Caulobacter sp. (strain K31).